The sequence spans 209 residues: Guanylate kinase (209 aa).

The Guanylate kinase-like domain occupies 5 to 182; the sequence is GLLIVISGPS…AVTKINSIIV (178 aa). 12-19 contributes to the ATP binding site; that stretch reads GPSGAGKG.

Belongs to the guanylate kinase family.

The protein resides in the cytoplasm. It carries out the reaction GMP + ATP = GDP + ADP. In terms of biological role, essential for recycling GMP and indirectly, cGMP. This chain is Guanylate kinase, found in Clostridium acetobutylicum (strain ATCC 824 / DSM 792 / JCM 1419 / IAM 19013 / LMG 5710 / NBRC 13948 / NRRL B-527 / VKM B-1787 / 2291 / W).